Consider the following 188-residue polypeptide: Archaemetzincin (188 aa).

Histidine 137 is a Zn(2+) binding site. The active-site Proton acceptor is the glutamate 138. Residues histidine 141, histidine 147, cysteine 148, cysteine 153, cysteine 172, and cysteine 175 each coordinate Zn(2+).

It belongs to the peptidase M54 family. Monomer. It depends on Zn(2+) as a cofactor.

In terms of biological role, probable zinc metalloprotease whose natural substrate is unknown. This is Archaemetzincin from Pyrococcus horikoshii (strain ATCC 700860 / DSM 12428 / JCM 9974 / NBRC 100139 / OT-3).